The primary structure comprises 303 residues: MNPQELKSILSSGLLSFPVTDFDAAGDFHQAGYVRRLEWLAPYGASALFAAGGTGEFFSLAPDEYSAVIKTAVDTCEKSVPILAGVGGPTRVAIQMAQEAERLGAKGLLLLPHYLTEASQEGVAAHVEQVCKAVKIGVVIYNRNVCRLNANLLEQLAERCPNLIGYKDGLGDIELMVSIRRRLGERLTYLGGLPTAEVYAAAYKALGVPVYSSAVFNFIPKTAMAFYKAIAADDQATVGKLIDDFFLPYLDIRNRRAGYAVSIVKAGAKIVGYDAGPVRAPLTDLLPEEYEALAKLIEAQGAQ.

The protein belongs to the DapA family.

The catalysed reaction is 5-dehydro-4-deoxy-D-glucarate + H(+) = 2,5-dioxopentanoate + CO2 + H2O. The protein operates within carbohydrate acid metabolism; D-glucarate degradation; 2,5-dioxopentanoate from D-glucarate: step 2/2. This Ectopseudomonas mendocina (strain ymp) (Pseudomonas mendocina) protein is Probable 5-dehydro-4-deoxyglucarate dehydratase.